The primary structure comprises 162 residues: SsrA-binding protein (162 aa).

Belongs to the SmpB family.

Its subcellular location is the cytoplasm. Its function is as follows. Required for rescue of stalled ribosomes mediated by trans-translation. Binds to transfer-messenger RNA (tmRNA), required for stable association of tmRNA with ribosomes. tmRNA and SmpB together mimic tRNA shape, replacing the anticodon stem-loop with SmpB. tmRNA is encoded by the ssrA gene; the 2 termini fold to resemble tRNA(Ala) and it encodes a 'tag peptide', a short internal open reading frame. During trans-translation Ala-aminoacylated tmRNA acts like a tRNA, entering the A-site of stalled ribosomes, displacing the stalled mRNA. The ribosome then switches to translate the ORF on the tmRNA; the nascent peptide is terminated with the 'tag peptide' encoded by the tmRNA and targeted for degradation. The ribosome is freed to recommence translation, which seems to be the essential function of trans-translation. The polypeptide is SsrA-binding protein (Granulibacter bethesdensis (strain ATCC BAA-1260 / CGDNIH1)).